The primary structure comprises 504 residues: Cytochrome P450 3A1 (504 aa).

C443 contacts heme.

Belongs to the cytochrome P450 family. Heme serves as cofactor.

The protein localises to the endoplasmic reticulum membrane. It is found in the microsome membrane. It catalyses the reaction an organic molecule + reduced [NADPH--hemoprotein reductase] + O2 = an alcohol + oxidized [NADPH--hemoprotein reductase] + H2O + H(+). Its function is as follows. Cytochromes P450 are a group of heme-thiolate monooxygenases. In liver microsomes, this enzyme is involved in an NADPH-dependent electron transport pathway. It oxidizes a variety of structurally unrelated compounds, including steroids, fatty acids, and xenobiotics. In Rattus norvegicus (Rat), this protein is Cytochrome P450 3A1 (Cyp3a1).